The following is a 288-amino-acid chain: ATP synthase subunit a (288 aa).

The next 6 helical transmembrane spans lie at 47–67 (LDSM…FWMV), 104–124 (LIAP…LMDL), 157–177 (DPNI…FYSI), 199–219 (PIVQ…TLIA), 237–257 (LIFI…SVPW), and 258–278 (AIFH…LTIV).

This sequence belongs to the ATPase A chain family. F-type ATPases have 2 components, CF(1) - the catalytic core - and CF(0) - the membrane proton channel. CF(1) has five subunits: alpha(3), beta(3), gamma(1), delta(1), epsilon(1). CF(0) has three main subunits: a(1), b(2) and c(9-12). The alpha and beta chains form an alternating ring which encloses part of the gamma chain. CF(1) is attached to CF(0) by a central stalk formed by the gamma and epsilon chains, while a peripheral stalk is formed by the delta and b chains.

The protein resides in the cell inner membrane. Key component of the proton channel; it plays a direct role in the translocation of protons across the membrane. The sequence is that of ATP synthase subunit a from Psychrobacter cryohalolentis (strain ATCC BAA-1226 / DSM 17306 / VKM B-2378 / K5).